We begin with the raw amino-acid sequence, 78 residues long: Large ribosomal subunit protein eL20 (78 aa).

This sequence belongs to the eukaryotic ribosomal protein eL20 family. As to quaternary structure, part of the 50S ribosomal subunit. Binds 23S rRNA.

The protein is Large ribosomal subunit protein eL20 of Pyrobaculum neutrophilum (strain DSM 2338 / JCM 9278 / NBRC 100436 / V24Sta) (Thermoproteus neutrophilus).